Consider the following 408-residue polypeptide: Aspartate aminotransferase, cytoplasmic (408 aa).

L-aspartate contacts are provided by G36, W133, and N187. The residue at position 251 (K251) is an N6-(pyridoxal phosphate)lysine. R379 serves as a coordination point for L-aspartate.

This sequence belongs to the class-I pyridoxal-phosphate-dependent aminotransferase family. As to quaternary structure, homodimer. It depends on pyridoxal 5'-phosphate as a cofactor. In terms of tissue distribution, expressed in all somatic tissues including the nervous system.

It localises to the cytoplasm. It catalyses the reaction L-aspartate + 2-oxoglutarate = oxaloacetate + L-glutamate. Its function is as follows. Biosynthesis of L-glutamate from L-aspartate. Important regulator of levels of glutamate, the major excitatory neurotransmitter of the central nervous system. This Caenorhabditis elegans protein is Aspartate aminotransferase, cytoplasmic.